The primary structure comprises 814 residues: Testis-specific zinc finger protein topi (814 aa).

C2H2-type zinc fingers lie at residues 228 to 250, 275 to 297, 360 to 382, 429 to 453, 467 to 490, 511 to 533, 539 to 564, 570 to 592, 598 to 620, and 626 to 649; these read NECT…MEKH, VKCN…GLIH, LQCE…SASH, FVCN…TSFH, LPCD…EEKH, YLCD…LRFH, FVCQ…RKCH, YLCL…RLIH, YECE…QRIH, and YSCL…RARH. The segment at 669–705 is disordered; it reads TAAAQKAQSHNPEQQDNDVAGGASTSDVPSGSGFMST. Polar residues predominate over residues 691–705; the sequence is ASTSDVPSGSGFMST.

In terms of assembly, interacts with comr. In terms of tissue distribution, expressed in testis; primary spermatocytes.

The protein resides in the nucleus. Functionally, required for male meiotic division and spermatid differentiation. Required for accumulation of aly and comr on chromatin. May function as a transcription factor. The sequence is that of Testis-specific zinc finger protein topi (topi) from Drosophila melanogaster (Fruit fly).